The sequence spans 859 residues: DNA mismatch repair protein MutS (859 aa).

617–624 (GPNMGGKS) is an ATP binding site. Positions 799-821 (ETTSLPHEQPRAKPGKPAVPQQS) are disordered.

Belongs to the DNA mismatch repair MutS family.

This protein is involved in the repair of mismatches in DNA. It is possible that it carries out the mismatch recognition step. This protein has a weak ATPase activity. In Pseudomonas savastanoi pv. phaseolicola (strain 1448A / Race 6) (Pseudomonas syringae pv. phaseolicola (strain 1448A / Race 6)), this protein is DNA mismatch repair protein MutS.